A 395-amino-acid chain; its full sequence is uncharacterized protein (395 aa).

8 consecutive transmembrane segments (helical) span residues 15–35 (ILAF…VTVF), 56–76 (WPWI…NIII), 86–106 (FHAP…FQIV), 131–151 (AVLL…LITW), 175–195 (WFSF…IFIA), 254–274 (LANI…FAIV), 298–318 (IAIT…TQFV), and 348–368 (VYIP…QVVI).

It is found in the cell membrane. This is an uncharacterized protein from Mycoplasma pneumoniae (strain ATCC 29342 / M129 / Subtype 1) (Mycoplasmoides pneumoniae).